The chain runs to 273 residues: Urease accessory protein UreD (273 aa).

The protein belongs to the UreD family. In terms of assembly, ureD, UreF and UreG form a complex that acts as a GTP-hydrolysis-dependent molecular chaperone, activating the urease apoprotein by helping to assemble the nickel containing metallocenter of UreC. The UreE protein probably delivers the nickel.

The protein resides in the cytoplasm. In terms of biological role, required for maturation of urease via the functional incorporation of the urease nickel metallocenter. This chain is Urease accessory protein UreD, found in Rhizobium leguminosarum bv. viciae.